Reading from the N-terminus, the 105-residue chain is T cell receptor alpha variable 40 (105 aa).

The first 19 residues, 1 to 19, serve as a signal peptide directing secretion; the sequence is MNSSLDFLILILMFGGTSS. In terms of domain architecture, Ig-like spans 20–105; sequence NSVKQTGQIT…DSAVYYCLLG (86 aa). A glycan (N-linked (GlcNAc...) asparagine) is linked at Asn39. A disulfide bridge links Cys40 with Cys102.

Alpha-beta TR is a heterodimer composed of an alpha and beta chain; disulfide-linked. The alpha-beta TR is associated with the transmembrane signaling CD3 coreceptor proteins to form the TR-CD3 (TcR or TCR). The assembly of alpha-beta TR heterodimers with CD3 occurs in the endoplasmic reticulum where a single alpha-beta TR heterodimer associates with one CD3D-CD3E heterodimer, one CD3G-CD3E heterodimer and one CD247 homodimer forming a stable octameric structure. CD3D-CD3E and CD3G-CD3E heterodimers preferentially associate with TR alpha and TR beta chains, respectively. The association of the CD247 homodimer is the last step of TcR assembly in the endoplasmic reticulum and is required for transport to the cell surface.

The protein localises to the cell membrane. In terms of biological role, v region of the variable domain of T cell receptor (TR) alpha chain that participates in the antigen recognition. Alpha-beta T cell receptors are antigen specific receptors which are essential to the immune response and are present on the cell surface of T lymphocytes. Recognize peptide-major histocompatibility (MH) (pMH) complexes that are displayed by antigen presenting cells (APC), a prerequisite for efficient T cell adaptive immunity against pathogens. Binding of alpha-beta TR to pMH complex initiates TR-CD3 clustering on the cell surface and intracellular activation of LCK that phosphorylates the ITAM motifs of CD3G, CD3D, CD3E and CD247 enabling the recruitment of ZAP70. In turn ZAP70 phosphorylates LAT, which recruits numerous signaling molecules to form the LAT signalosome. The LAT signalosome propagates signal branching to three major signaling pathways, the calcium, the mitogen-activated protein kinase (MAPK) kinase and the nuclear factor NF-kappa-B (NF-kB) pathways, leading to the mobilization of transcription factors that are critical for gene expression and essential for T cell growth and differentiation. The T cell repertoire is generated in the thymus, by V-(D)-J rearrangement. This repertoire is then shaped by intrathymic selection events to generate a peripheral T cell pool of self-MH restricted, non-autoaggressive T cells. Post-thymic interaction of alpha-beta TR with the pMH complexes shapes TR structural and functional avidity. The chain is T cell receptor alpha variable 40 from Homo sapiens (Human).